Here is a 680-residue protein sequence, read N- to C-terminus: MVPGVPGAVLTLCLWLAASSGCLAAGPGAAAARRLDESLSAGSVQRARCASRCLSLQITRISAFFQHFQNNGSLVWCQNHKQCSKCLEPCKESGDLRKHQCQSFCEPLFPKKSYECLTSCEFLKYILLVKQGDCPAPEKASGFAAACVESCEVDNECSGVKKCCSNGCGHTCQVPKTLYKGVPLKPRKELRFTELQSGQLEVKWSSKFNISIEPVIYVVQRRWNYGIHPSEDDATHWQTVAQTTDERVQLTDIRPSRWYQFRVAAVNVHGTRGFTAPSKHFRSSKDPSAPPAPANLRLANSTVNSDGSVTVTIVWDLPEEPDIPVHHYKVFWSWMVSSKSLVPTKKKRRKTTDGFQNSVILEKLQPDCDYVVELQAITYWGQTRLKSAKVSLHFTSTHATNNKEQLVKTRKGGIQTQLPFQRRRPTRPLEVGAPFYQDGQLQVKVYWKKTEDPTVNRYHVRWFPEACAHNRTTGSEASSGMTHENYIILQDLSFSCKYKVTVQPIRPKSHSKAEAVFFTTPPCSALKGKSHKPVGCLGEAGHVLSKVLAKPENLSASFIVQDVNITGHFSWKMAKANLYQPMTGFQVTWAEVTTESRQNSLPNSIISQSQILPSDHYVLTVPNLRPSTLYRLEVQVLTPGGEGPATIKTFRTPELPPSSAHRSHLKHRHPHHYKPSPERY.

Positions 1–24 (MVPGVPGAVLTLCLWLAASSGCLA) are cleaved as a signal peptide. 5 disulfide bridges follow: C49–C83, C53–C77, C86–C105, C90–C101, and C116–C120. N-linked (GlcNAc...) asparagine glycosylation occurs at N71. A WAP domain is found at 127–176 (LLVKQGDCPAPEKASGFAAACVESCEVDNECSGVKKCCSNGCGHTCQVPK). 4 consecutive Fibronectin type-III domains span residues 186-287 (PRKE…SKDP), 292-400 (APAN…THAT), 425-523 (PTRP…TPPC), and 550-658 (KPEN…LPPS). 5 N-linked (GlcNAc...) asparagine glycosylation sites follow: N209, N300, N470, N553, and N564. Residues 642 to 680 (EGPATIKTFRTPELPPSSAHRSHLKHRHPHHYKPSPERY) are disordered. Residues 661–674 (HRSHLKHRHPHHYK) show a composition bias toward basic residues.

Interacts with FGFR1; this interaction does not interfere with FGF2-binding to FGFR1. Binds heparin. Heparin may promote or interfere with ANOS1-FGFR1-FGF2 complex formation depending on the sequential order of its binding to the various constituents. For instance, heparin-ANOS1 interaction favors subsequent binding to pre-existing binary FGFR1-FGF2 complex, while heparin-FGF2 complex does not interact with ANOS1-FGFR1. Post-translationally, N-glycosylated. In terms of processing, may be proteolytically cleaved at the cell surface and released from the cell surface. In terms of tissue distribution, expressed in the cerebellum (at protein level).

It localises to the cell membrane. It is found in the secreted. Functionally, has a dual branch-promoting and guidance activity, which may play an important role in the patterning of mitral and tufted cell collaterals to the olfactory cortex. Chemoattractant for fetal olfactory epithelial cells. The polypeptide is Anosmin-1 (Homo sapiens (Human)).